The primary structure comprises 343 residues: Small ribosomal subunit biogenesis GTPase RsgA (343 aa).

The region spanning 116–275 (RGQLKPVAAN…LIDSPGIREF (160 aa)) is the CP-type G domain. GTP-binding positions include 163–166 (NKAD) and 217–225 (GQSGVGKSS). Zn(2+) is bound by residues C299, C304, H306, and C312.

This sequence belongs to the TRAFAC class YlqF/YawG GTPase family. RsgA subfamily. In terms of assembly, monomer. Associates with 30S ribosomal subunit, binds 16S rRNA. The cofactor is Zn(2+).

It is found in the cytoplasm. One of several proteins that assist in the late maturation steps of the functional core of the 30S ribosomal subunit. Helps release RbfA from mature subunits. May play a role in the assembly of ribosomal proteins into the subunit. Circularly permuted GTPase that catalyzes slow GTP hydrolysis, GTPase activity is stimulated by the 30S ribosomal subunit. The sequence is that of Small ribosomal subunit biogenesis GTPase RsgA from Ectopseudomonas mendocina (strain ymp) (Pseudomonas mendocina).